Consider the following 505-residue polypeptide: MEELQGHRELDRSWQHNFLYPLIFQEYIYTFAYDHGLNKLILLENVVDQKYSLLTVKRLITRLYQQNHLIFSANDSNQNEIFGHKHKKNLYSQMITEGFAVIVEIPFSLLLISSLDGKEKKIVKSPNLQSIHSIFPFLEDKFLYLNYVLDILIPYPAHLEILVQTLRYWLKDASSLHLLRFFLYECRNWTSRITSKESISFXKTRNRRLFLFLYNFYVCEYESFFVILRNQSSYLRSTSFGALLERIHFYRKFKYLVKVKACAVILCFFKEPFPHYVRYQGKALLASKGTSLLMHKWKYYFISFWQCYFSVWSQPRRIYINQLSNYSLDFMGFLSSVRFNSSVIRSQMLENSFLLENIPNKFRSMGPISPLSGSLAKPKFWTELGHPIGKSVWTGLSDSDIIDRFGRICRNLSHYYSGSSRKKNLYRIKYILRLSCARTLSRKHKSTVRAFLKRLGSEFLEEFFTEEGKFLSLILPRDFSTSGGLYKGRVWYLDIICIHNLVNDQ.

The protein belongs to the intron maturase 2 family. MatK subfamily.

The protein localises to the plastid. The protein resides in the chloroplast. Functionally, usually encoded in the trnK tRNA gene intron. Probably assists in splicing its own and other chloroplast group II introns. This chain is Maturase K, found in Gomphrena haageana (Haage's globe-amaranth).